The primary structure comprises 171 residues: Small ribosomal subunit protein uS13 (171 aa).

Disordered regions lie at residues 1-22 (MGKA…AAKK) and 142-171 (RHEK…RKKE). A compositionally biased stretch (basic and acidic residues) spans 10–22 (KSDKEAAKPAAKK). Residues 142 to 158 (RHEKGKKVRGQRTRSNG) are compositionally biased toward basic residues.

This sequence belongs to the universal ribosomal protein uS13 family. In terms of assembly, part of the 30S ribosomal subunit. Forms a loose heterodimer with protein S19. Forms two bridges to the 50S subunit in the 70S ribosome.

Located at the top of the head of the 30S subunit, it contacts several helices of the 16S rRNA. In the 70S ribosome it contacts the 23S rRNA (bridge B1a) and protein L5 of the 50S subunit (bridge B1b), connecting the 2 subunits; these bridges are implicated in subunit movement. This is Small ribosomal subunit protein uS13 from Thermoplasma volcanium (strain ATCC 51530 / DSM 4299 / JCM 9571 / NBRC 15438 / GSS1).